We begin with the raw amino-acid sequence, 1372 residues long: DNA-directed RNA polymerase subunit beta (1372 aa).

It belongs to the RNA polymerase beta chain family. The RNAP catalytic core consists of 2 alpha, 1 beta, 1 beta' and 1 omega subunit. When a sigma factor is associated with the core the holoenzyme is formed, which can initiate transcription.

The enzyme catalyses RNA(n) + a ribonucleoside 5'-triphosphate = RNA(n+1) + diphosphate. In terms of biological role, DNA-dependent RNA polymerase catalyzes the transcription of DNA into RNA using the four ribonucleoside triphosphates as substrates. The protein is DNA-directed RNA polymerase subunit beta of Rickettsia bellii (strain OSU 85-389).